Reading from the N-terminus, the 311-residue chain is Inositol oxygenase 1 (311 aa).

Positions 1–11 (MTILIDRHSDQ) are enriched in basic and acidic residues. The tract at residues 1-29 (MTILIDRHSDQNDAGDEIVEKNQGNGKEE) is disordered. Residues arginine 52 and 109 to 111 (DES) each bind substrate. Histidine 122, histidine 147, and aspartate 148 together coordinate Fe cation. Substrate contacts are provided by residues lysine 151 and 168-169 (GD). Positions 220, 246, and 279 each coordinate Fe cation. 246-247 (HS) contributes to the substrate binding site.

The protein belongs to the myo-inositol oxygenase family. Fe cation serves as cofactor. In terms of tissue distribution, expressed in roots, young leaves, stems, flowers and siliques.

Its subcellular location is the cytoplasm. The catalysed reaction is myo-inositol + O2 = D-glucuronate + H2O + H(+). Its pathway is polyol metabolism; myo-inositol degradation into D-glucuronate; D-glucuronate from myo-inositol: step 1/1. Its function is as follows. Catalyzes the oxygenative cleavage of myo-inositol to D-glucuronate. Involved in the biosynthesis of UDP-glucuronic acid (UDP-GlcA), providing nucleotide sugars for cell-wall polymers. May be also involved in plant ascorbate biosynthesis. This chain is Inositol oxygenase 1 (MIOX1), found in Arabidopsis thaliana (Mouse-ear cress).